Reading from the N-terminus, the 299-residue chain is Ankyrin repeat domain-containing protein 54 (299 aa).

The segment at 1 to 27 (MAATGGGADDESRSGRSSSDGECAVAP) is disordered. Residue alanine 2 is modified to N-acetylalanine. Serine 62 carries the post-translational modification Phosphoserine. The Nuclear localization signal (NLS) motif lies at 98-116 (RRLGPTGKEVHALKRLRDS). ANK repeat units lie at residues 108–137 (HALKRLRDSANANDVETVQQLLEDGADPCA), 141–170 (KGRTALHFASCNGNDQIVQLLLDHGADPNQ), 174–203 (LGNTPLHLAACTNHVPVITTLLRGGARVDA), and 207–239 (AGRTPLHLAKSKLNILQEGHSQCLEAVRLEVKQ). An LYN-binding region spans residues 140–240 (DKGRTALHFA…EAVRLEVKQI (101 aa)). Residues 282–292 (LLASFTSLSLQ) carry the Nuclear export signal (NES) motif.

Interacts (via ankyrin repeat region) with LYN (via SH3-domain) in an activation-independent status of LYN. Forms a multiprotein complex with LYN and HCLS1. Interacts with TSN2, VAV1, DBNL and LASP1. In terms of tissue distribution, expressed in a variety of hemopoietic cell lines and tissue with high levels in testis. Highly expressed in ciliated cells.

It is found in the nucleus. The protein resides in the cytoplasm. It localises to the midbody. Functionally, plays an important role in regulating intracellular signaling events associated with erythroid terminal differentiation. The sequence is that of Ankyrin repeat domain-containing protein 54 (Ankrd54) from Mus musculus (Mouse).